Here is a 158-residue protein sequence, read N- to C-terminus: 6,7-dimethyl-8-ribityllumazine synthase (158 aa).

5-amino-6-(D-ribitylamino)uracil-binding positions include Phe24, 58–60, and 82–84; these read AFE and AVI. 87 to 88 serves as a coordination point for (2S)-2-hydroxy-3-oxobutyl phosphate; it reads GT. Catalysis depends on His90, which acts as the Proton donor. Phe115 lines the 5-amino-6-(D-ribitylamino)uracil pocket. Arg129 contacts (2S)-2-hydroxy-3-oxobutyl phosphate.

Belongs to the DMRL synthase family. In terms of assembly, forms an icosahedral capsid composed of 60 subunits, arranged as a dodecamer of pentamers.

It carries out the reaction (2S)-2-hydroxy-3-oxobutyl phosphate + 5-amino-6-(D-ribitylamino)uracil = 6,7-dimethyl-8-(1-D-ribityl)lumazine + phosphate + 2 H2O + H(+). It participates in cofactor biosynthesis; riboflavin biosynthesis; riboflavin from 2-hydroxy-3-oxobutyl phosphate and 5-amino-6-(D-ribitylamino)uracil: step 1/2. Catalyzes the formation of 6,7-dimethyl-8-ribityllumazine by condensation of 5-amino-6-(D-ribitylamino)uracil with 3,4-dihydroxy-2-butanone 4-phosphate. This is the penultimate step in the biosynthesis of riboflavin. The polypeptide is 6,7-dimethyl-8-ribityllumazine synthase (Pseudomonas putida (strain GB-1)).